The primary structure comprises 633 residues: Phosphomethylpyrimidine synthase (633 aa).

The segment covering 1-13 (MNIRSNPDTTLPA) has biased composition (polar residues). A disordered region spans residues 1-20 (MNIRSNPDTTLPAVTTGPLP). Substrate-binding positions include Asn-221, Met-250, Tyr-279, His-315, 335–337 (SRG), 376–379 (DGLR), and Glu-415. His-419 contacts Zn(2+). Tyr-442 serves as a coordination point for substrate. His-483 provides a ligand contact to Zn(2+). [4Fe-4S] cluster-binding residues include Cys-563, Cys-566, and Cys-571.

The protein belongs to the ThiC family. As to quaternary structure, homodimer. It depends on [4Fe-4S] cluster as a cofactor.

It catalyses the reaction 5-amino-1-(5-phospho-beta-D-ribosyl)imidazole + S-adenosyl-L-methionine = 4-amino-2-methyl-5-(phosphooxymethyl)pyrimidine + CO + 5'-deoxyadenosine + formate + L-methionine + 3 H(+). Its pathway is cofactor biosynthesis; thiamine diphosphate biosynthesis. Catalyzes the synthesis of the hydroxymethylpyrimidine phosphate (HMP-P) moiety of thiamine from aminoimidazole ribotide (AIR) in a radical S-adenosyl-L-methionine (SAM)-dependent reaction. The protein is Phosphomethylpyrimidine synthase of Bradyrhizobium sp. (strain ORS 278).